A 173-amino-acid polypeptide reads, in one-letter code: 5-hydroxymethyl-dUMP N-hydrolase (173 aa).

A2 carries the post-translational modification N-acetylalanine. G16 is a binding site for 5-hydroxymethyl-dUMP. Position 17 is a phosphoserine (S17). 5-hydroxymethyl-dUMP is bound by residues I18, R19, G20, S87, G89, and E93. S87 is subject to Phosphoserine. S112, S117, S127, and S158 each carry phosphoserine. S117 is a 5-hydroxymethyl-dUMP binding site.

It belongs to the 2'-deoxynucleoside 5'-phosphate N-hydrolase 1 family. As to quaternary structure, monomer and homodimer.

Its subcellular location is the cytoplasm. It localises to the nucleus. The catalysed reaction is 5-hydroxymethyl-dUMP + H2O = 5-hydroxymethyluracil + 2-deoxy-D-ribose 5-phosphate. Its function is as follows. Part of a nucleotide salvage pathway that eliminates epigenetically modified 5-hydroxymethyl-dCMP (hmdCMP) in a two-step process entailing deamination to cytotoxic 5-hydroxymethyl-dUMP (hmdUMP), followed by its hydrolysis into 5-hydroxymethyluracil (hmU) and 2-deoxy-D-ribose 5-phosphate (deoxyribosephosphate). Catalyzes the second step in that pathway, the hydrolysis of the N-glycosidic bond in hmdUMP, degrading this cytotoxic nucleotide to avoid its genomic integration. This Mus musculus (Mouse) protein is 5-hydroxymethyl-dUMP N-hydrolase.